We begin with the raw amino-acid sequence, 262 residues long: Abhydrolase domain-containing protein ACTT2-1 (262 aa).

The Peroxisomal targeting signal type 1 motif lies at 260-262 (SKL).

This sequence belongs to the AB hydrolase superfamily. AKT2 hydrolase family.

The protein localises to the peroxisome. Its pathway is mycotoxin biosynthesis. Its function is as follows. Abhydrolase domain-containing protein; part of the gene clusters that mediate the biosynthesis of the host-selective toxins (HSTs) ACT-toxins responsible for brown spot of tangerine disease by the tangerine pathotype which affects tangerines and mandarins. ACT-toxins consist of three moieties, 9,10-epoxy-8-hydroxy-9-methyl-decatrienoic acid (EDA), valine and a polyketide. ACT-toxin I is toxic to both citrus and pear; toxin II the 5''-deoxy derivative of ACT-toxin I, is highly toxic to pear and slightly toxic to citrus. On cellular level, ACT-toxins affect plasma membrane of susceptible cells and cause a sudden increase in loss of K(+) after a few minutes of toxin treatment. The acyl-CoA ligase ACTT1, the hydrolase ACTT2, the enoyl-CoA hydratases ACTT3 and ACTT6, and the acyl-CoA synthetase ACTT5 are all involved in the biosynthesis of the AK-, AF- and ACT-toxin common 9,10-epoxy-8-hydroxy-9-methyl-decatrienoic acid (EDA) structural moiety. The exact role of each enzyme, and of additional enzymes identified within the AF-toxin clusters have still to be determined. On the other hand, ACTTS1 to ACTTS4 are specific to the tangerine pathotype. The function of ACTTS3 is to elongate the polyketide chain portion of ACT-toxin that is unique to this toxin. The enoyl-reductase ACTTS2 might complement the missing enoyl-reductase (ER) domain in ACTTS3 in the synthesis of the polyketide portion of ACT-toxin. The roles of the nonribosomal peptide synthetases-related proteins ACTTS1 and ACTTS4 have also still not been elucidated. The polypeptide is Abhydrolase domain-containing protein ACTT2-1 (Alternaria alternata (Alternaria rot fungus)).